A 124-amino-acid chain; its full sequence is MRDSKDRFIIRKNRVRAKIAKLSGGGYPRLSVFKSNRHIYAQVIENIGSNKSNTIAAASTLDRDIFTELKYYKCNIQYAKKVGQLLAERANSKGITSVVFDRGGYKYHGVIKALADGAREKLNF.

This sequence belongs to the universal ribosomal protein uL18 family. In terms of assembly, part of the 50S ribosomal subunit; part of the 5S rRNA/L5/L18/L25 subcomplex. Contacts the 5S and 23S rRNAs.

Functionally, this is one of the proteins that bind and probably mediate the attachment of the 5S RNA into the large ribosomal subunit, where it forms part of the central protuberance. This chain is Large ribosomal subunit protein uL18, found in Orientia tsutsugamushi (strain Ikeda) (Rickettsia tsutsugamushi).